A 325-amino-acid polypeptide reads, in one-letter code: Malate dehydrogenase (325 aa).

7–13 (GSTGRVG) lines the NADP(+) pocket. Residues arginine 84 and arginine 90 each contribute to the substrate site. Residues asparagine 97 and 120-122 (VTN) each bind NADP(+). Positions 122 and 153 each coordinate substrate. Histidine 177 (proton acceptor) is an active-site residue.

This sequence belongs to the LDH/MDH superfamily.

It carries out the reaction (S)-malate + NADP(+) = oxaloacetate + NADPH + H(+). The enzyme catalyses (S)-malate + NAD(+) = oxaloacetate + NADH + H(+). Catalyzes the reversible oxidation of malate to oxaloacetate. The polypeptide is Malate dehydrogenase (mdh) (Methanothermobacter thermautotrophicus (strain ATCC 29096 / DSM 1053 / JCM 10044 / NBRC 100330 / Delta H) (Methanobacterium thermoautotrophicum)).